A 290-amino-acid chain; its full sequence is tRNA (guanine-N(7)-)-methyltransferase (290 aa).

Composition is skewed to basic and acidic residues over residues Met1–Arg12 and Ala20–Lys43. Residues Met1–Ser49 are disordered. S-adenosyl-L-methionine contacts are provided by Glu104, Asp129, Asp156, and Asp179. Residue Asp179 is part of the active site. Substrate is bound by residues Lys183, Asp215, and Thr252 to Glu255.

This sequence belongs to the class I-like SAM-binding methyltransferase superfamily. TrmB family.

It catalyses the reaction guanosine(46) in tRNA + S-adenosyl-L-methionine = N(7)-methylguanosine(46) in tRNA + S-adenosyl-L-homocysteine. The protein operates within tRNA modification; N(7)-methylguanine-tRNA biosynthesis. In terms of biological role, catalyzes the formation of N(7)-methylguanine at position 46 (m7G46) in tRNA. In Streptomyces avermitilis (strain ATCC 31267 / DSM 46492 / JCM 5070 / NBRC 14893 / NCIMB 12804 / NRRL 8165 / MA-4680), this protein is tRNA (guanine-N(7)-)-methyltransferase.